Here is a 138-residue protein sequence, read N- to C-terminus: Histone H2B.3 (138 aa).

Composition is skewed to basic and acidic residues over residues 1-18 (MAPK…EKTT) and 26-38 (EKRP…GGDK). Positions 1-46 (MAPKAEKKPVAEKAEKTTAAKKTKAEKRPPASKEGGDKKGKKKSKK) are disordered. 2 positions are modified to N6-acetyllysine: K7 and K27. A Glycyl lysine isopeptide (Lys-Gly) (interchain with G-Cter in ubiquitin) cross-link involves residue K134.

The protein belongs to the histone H2B family. The nucleosome is a histone octamer containing two molecules each of H2A, H2B, H3 and H4 assembled in one H3-H4 heterotetramer and two H2A-H2B heterodimers. The octamer wraps approximately 147 bp of DNA. Post-translationally, can be acetylated to form H2BK6ac and H2BK33ac. In terms of processing, monoubiquitinated to form H2BK143ub1; may give a specific tag for epigenetic transcriptional activation.

Its subcellular location is the nucleus. The protein localises to the chromosome. Its function is as follows. Core component of nucleosome. Nucleosomes wrap and compact DNA into chromatin, limiting DNA accessibility to the cellular machineries which require DNA as a template. Histones thereby play a central role in transcription regulation, DNA repair, DNA replication and chromosomal stability. DNA accessibility is regulated via a complex set of post-translational modifications of histones, also called histone code, and nucleosome remodeling. The sequence is that of Histone H2B.3 from Triticum aestivum (Wheat).